A 360-amino-acid chain; its full sequence is Phosphoserine aminotransferase (360 aa).

Position 41 (R41) interacts with L-glutamate. Pyridoxal 5'-phosphate-binding positions include 75–76, W99, T152, D171, and Q194; that span reads AS. K195 is subject to N6-(pyridoxal phosphate)lysine. Residue 236-237 participates in pyridoxal 5'-phosphate binding; it reads NT.

Belongs to the class-V pyridoxal-phosphate-dependent aminotransferase family. SerC subfamily. In terms of assembly, homodimer. Requires pyridoxal 5'-phosphate as cofactor.

The protein localises to the cytoplasm. The enzyme catalyses O-phospho-L-serine + 2-oxoglutarate = 3-phosphooxypyruvate + L-glutamate. The catalysed reaction is 4-(phosphooxy)-L-threonine + 2-oxoglutarate = (R)-3-hydroxy-2-oxo-4-phosphooxybutanoate + L-glutamate. Its pathway is amino-acid biosynthesis; L-serine biosynthesis; L-serine from 3-phospho-D-glycerate: step 2/3. The protein operates within cofactor biosynthesis; pyridoxine 5'-phosphate biosynthesis; pyridoxine 5'-phosphate from D-erythrose 4-phosphate: step 3/5. Functionally, catalyzes the reversible conversion of 3-phosphohydroxypyruvate to phosphoserine and of 3-hydroxy-2-oxo-4-phosphonooxybutanoate to phosphohydroxythreonine. The polypeptide is Phosphoserine aminotransferase (Porphyromonas gingivalis (strain ATCC 33277 / DSM 20709 / CIP 103683 / JCM 12257 / NCTC 11834 / 2561)).